The following is a 265-amino-acid chain: Hydroxyethylthiazole kinase (265 aa).

Met50 serves as a coordination point for substrate. Residues Arg125 and Thr171 each contribute to the ATP site. Residue Gly198 participates in substrate binding.

The protein belongs to the Thz kinase family. Requires Mg(2+) as cofactor.

The catalysed reaction is 5-(2-hydroxyethyl)-4-methylthiazole + ATP = 4-methyl-5-(2-phosphooxyethyl)-thiazole + ADP + H(+). Its pathway is cofactor biosynthesis; thiamine diphosphate biosynthesis; 4-methyl-5-(2-phosphoethyl)-thiazole from 5-(2-hydroxyethyl)-4-methylthiazole: step 1/1. Functionally, catalyzes the phosphorylation of the hydroxyl group of 4-methyl-5-beta-hydroxyethylthiazole (THZ). In Salmonella newport (strain SL254), this protein is Hydroxyethylthiazole kinase.